The following is a 131-amino-acid chain: Small ribosomal subunit protein bS6 (131 aa).

Residues 98–131 (EASPMVKAKDERRERRDDFANETADDAEAGDSEE) form a disordered region. The segment covering 104–116 (KAKDERRERRDDF) has biased composition (basic and acidic residues). A compositionally biased stretch (acidic residues) spans 120-131 (TADDAEAGDSEE).

This sequence belongs to the bacterial ribosomal protein bS6 family.

In terms of biological role, binds together with bS18 to 16S ribosomal RNA. The chain is Small ribosomal subunit protein bS6 from Cronobacter sakazakii (strain ATCC BAA-894) (Enterobacter sakazakii).